Consider the following 261-residue polypeptide: 3-methyl-2-oxobutanoate hydroxymethyltransferase (261 aa).

Mg(2+)-binding residues include Asp-44 and Asp-83. Residues 44 to 45 (DS), Asp-83, and Lys-113 each bind 3-methyl-2-oxobutanoate. Glu-115 contributes to the Mg(2+) binding site. Glu-183 functions as the Proton acceptor in the catalytic mechanism.

It belongs to the PanB family. In terms of assembly, homodecamer; pentamer of dimers. Mg(2+) serves as cofactor.

It is found in the cytoplasm. It carries out the reaction 3-methyl-2-oxobutanoate + (6R)-5,10-methylene-5,6,7,8-tetrahydrofolate + H2O = 2-dehydropantoate + (6S)-5,6,7,8-tetrahydrofolate. It functions in the pathway cofactor biosynthesis; (R)-pantothenate biosynthesis; (R)-pantoate from 3-methyl-2-oxobutanoate: step 1/2. Functionally, catalyzes the reversible reaction in which hydroxymethyl group from 5,10-methylenetetrahydrofolate is transferred onto alpha-ketoisovalerate to form ketopantoate. This Cyanothece sp. (strain PCC 7425 / ATCC 29141) protein is 3-methyl-2-oxobutanoate hydroxymethyltransferase.